Consider the following 232-residue polypeptide: Very-long-chain (3R)-3-hydroxyacyl-CoA dehydratase 4 (232 aa).

The Cytoplasmic portion of the chain corresponds to 1-19 (MGPSVLPAWLQPRYRKNVY). The helical transmembrane segment at 20–40 (LFIYYLIQFCGHSWILANMTV) threads the bilayer. At 41 to 56 (RFFSFGKDSMADTFYA) the chain is on the lumenal side. The chain crosses the membrane as a helical span at residues 57-77 (IGLVMRVCQSISLLELLHIYI). Over 78 to 112 (GIESNQLFPRFLQLTERVIILFGVITSQEEVQEKC) the chain is Cytoplasmic. Residues 113–133 (VVCVLFILWNLLDMVRYTYSM) form a helical membrane-spanning segment. At 134 to 135 (LS) the chain is on the lumenal side. The chain crosses the membrane as a helical span at residues 136–156 (VIGTSYAALTWLSQTLWMPIY). Y156 is an active-site residue. Position 157 (P157) is a topological domain, cytoplasmic. A helical transmembrane segment spans residues 158–178 (LCVLAEAFTIYQSLPYFESFG). Residue E163 is part of the active site. Residues 179-189 (TNSTVLPFDLS) lie on the Lumenal side of the membrane. Residues 190-210 (TCFPYVLKLYLMMLFIGMYFT) traverse the membrane as a helical segment. At 211-232 (YSHLYTERKDFLRVFSVKQKNV) the chain is on the cytoplasmic side.

The protein belongs to the very long-chain fatty acids dehydratase HACD family. In terms of assembly, may interact with enzymes of the ELO family (including ELOVL1); with those enzymes that mediate condensation, the first of the four steps of the reaction cycle responsible for fatty acids elongation, may be part of a larger fatty acids elongase complex.

It localises to the endoplasmic reticulum membrane. The enzyme catalyses a very-long-chain (3R)-3-hydroxyacyl-CoA = a very-long-chain (2E)-enoyl-CoA + H2O. It catalyses the reaction (3R)-hydroxyhexadecanoyl-CoA = (2E)-hexadecenoyl-CoA + H2O. It functions in the pathway lipid metabolism; fatty acid biosynthesis. Functionally, catalyzes the third of the four reactions of the long-chain fatty acids elongation cycle. This endoplasmic reticulum-bound enzymatic process, allows the addition of two carbons to the chain of long- and very long-chain fatty acids/VLCFAs per cycle. This enzyme catalyzes the dehydration of the 3-hydroxyacyl-CoA intermediate into trans-2,3-enoyl-CoA, within each cycle of fatty acid elongation. Thereby, it participates in the production of VLCFAs of different chain lengths that are involved in multiple biological processes as precursors of membrane lipids and lipid mediators. The polypeptide is Very-long-chain (3R)-3-hydroxyacyl-CoA dehydratase 4 (Mus musculus (Mouse)).